A 505-amino-acid polypeptide reads, in one-letter code: Glycerol kinase (505 aa).

Position 14 (threonine 14) interacts with ADP. Threonine 14, threonine 15, and serine 16 together coordinate ATP. Position 14 (threonine 14) interacts with sn-glycerol 3-phosphate. Position 18 (arginine 18) interacts with ADP. The sn-glycerol 3-phosphate site is built by arginine 84, glutamate 85, tyrosine 136, and aspartate 246. Glycerol-binding residues include arginine 84, glutamate 85, tyrosine 136, aspartate 246, and glutamine 247. Residues threonine 268 and glycine 311 each contribute to the ADP site. 4 residues coordinate ATP: threonine 268, glycine 311, glutamine 315, and glycine 412. 2 residues coordinate ADP: glycine 412 and asparagine 416.

The protein belongs to the FGGY kinase family.

The enzyme catalyses glycerol + ATP = sn-glycerol 3-phosphate + ADP + H(+). Its pathway is polyol metabolism; glycerol degradation via glycerol kinase pathway; sn-glycerol 3-phosphate from glycerol: step 1/1. With respect to regulation, inhibited by fructose 1,6-bisphosphate (FBP). Its function is as follows. Key enzyme in the regulation of glycerol uptake and metabolism. Catalyzes the phosphorylation of glycerol to yield sn-glycerol 3-phosphate. In Vibrio vulnificus (strain CMCP6), this protein is Glycerol kinase.